Consider the following 499-residue polypeptide: Glycerol kinase (499 aa).

Thr13 contacts ADP. 3 residues coordinate ATP: Thr13, Thr14, and Ser15. Thr13 provides a ligand contact to sn-glycerol 3-phosphate. ADP is bound at residue Arg17. 4 residues coordinate sn-glycerol 3-phosphate: Arg83, Glu84, Tyr135, and Asp245. Residues Arg83, Glu84, Tyr135, Asp245, and Gln246 each contribute to the glycerol site. Residues Thr267 and Gly310 each coordinate ADP. ATP contacts are provided by Thr267, Gly310, Gln314, and Gly411. ADP contacts are provided by Gly411 and Asn415.

This sequence belongs to the FGGY kinase family.

The enzyme catalyses glycerol + ATP = sn-glycerol 3-phosphate + ADP + H(+). Its pathway is polyol metabolism; glycerol degradation via glycerol kinase pathway; sn-glycerol 3-phosphate from glycerol: step 1/1. Its activity is regulated as follows. Inhibited by fructose 1,6-bisphosphate (FBP). In terms of biological role, key enzyme in the regulation of glycerol uptake and metabolism. Catalyzes the phosphorylation of glycerol to yield sn-glycerol 3-phosphate. The polypeptide is Glycerol kinase (Stenotrophomonas maltophilia (strain K279a)).